Here is a 593-residue protein sequence, read N- to C-terminus: 3-hydroxy-3-methylglutaryl-coenzyme A reductase (593 aa).

The interval 1 to 36 (MDVRRRSINSIHQIPSVGGTAPPMLKPKQPTKVDAV) is disordered. Helical transmembrane passes span 52–72 (LYIT…YLLV) and 94–114 (AIFT…IGLV). A linker region spans residues 115-177 (QPFTSRSSHD…PVPISPPSSE (63 aa)). Positions 178-593 (EDEEIIKSVV…SNKDVTKASS (416 aa)) are catalytic. Catalysis depends on E272, which acts as the Charge relay system. N-linked (GlcNAc...) asparagine glycosylation occurs at N336. The active-site Charge relay system is K404. N449 carries N-linked (GlcNAc...) asparagine glycosylation. The active-site Charge relay system is the D480. H578 functions as the Proton donor in the catalytic mechanism. N582 carries an N-linked (GlcNAc...) asparagine glycan.

The protein belongs to the HMG-CoA reductase family.

The protein localises to the endoplasmic reticulum membrane. It catalyses the reaction (R)-mevalonate + 2 NADP(+) + CoA = (3S)-3-hydroxy-3-methylglutaryl-CoA + 2 NADPH + 2 H(+). The protein operates within metabolic intermediate biosynthesis; (R)-mevalonate biosynthesis; (R)-mevalonate from acetyl-CoA: step 3/3. In terms of biological role, catalyzes the synthesis of mevalonate. The specific precursor of all isoprenoid compounds present in plants. The chain is 3-hydroxy-3-methylglutaryl-coenzyme A reductase from Camptotheca acuminata (Happy tree).